A 361-amino-acid polypeptide reads, in one-letter code: 3-dehydroquinate synthase (361 aa).

Residues 60 to 65 (DAEAAK), 94 to 98 (GATTD), 118 to 119 (TT), lysine 131, and lysine 140 each bind NAD(+). Positions 173, 242, and 258 each coordinate Zn(2+).

The protein belongs to the sugar phosphate cyclases superfamily. Dehydroquinate synthase family. Co(2+) is required as a cofactor. It depends on Zn(2+) as a cofactor. Requires NAD(+) as cofactor.

The protein resides in the cytoplasm. The enzyme catalyses 7-phospho-2-dehydro-3-deoxy-D-arabino-heptonate = 3-dehydroquinate + phosphate. Its pathway is metabolic intermediate biosynthesis; chorismate biosynthesis; chorismate from D-erythrose 4-phosphate and phosphoenolpyruvate: step 2/7. In terms of biological role, catalyzes the conversion of 3-deoxy-D-arabino-heptulosonate 7-phosphate (DAHP) to dehydroquinate (DHQ). This Cutibacterium acnes (strain DSM 16379 / KPA171202) (Propionibacterium acnes) protein is 3-dehydroquinate synthase.